We begin with the raw amino-acid sequence, 327 residues long: Ribosomal RNA large subunit methyltransferase F (327 aa).

It belongs to the methyltransferase superfamily. METTL16/RlmF family.

The protein resides in the cytoplasm. The catalysed reaction is adenosine(1618) in 23S rRNA + S-adenosyl-L-methionine = N(6)-methyladenosine(1618) in 23S rRNA + S-adenosyl-L-homocysteine + H(+). Functionally, specifically methylates the adenine in position 1618 of 23S rRNA. This is Ribosomal RNA large subunit methyltransferase F from Marinomonas sp. (strain MWYL1).